The following is a 495-amino-acid chain: Putative lon protease homolog (495 aa).

52–59 (GPPGVGKS) provides a ligand contact to ATP. Residues 471 to 495 (YSSETTGSQRDSTYNYANMDDRSYE) form a disordered region. Residues 472-486 (SSETTGSQRDSTYNY) are compositionally biased toward polar residues.

This sequence belongs to the peptidase S16 family.

In Thermoplasma volcanium (strain ATCC 51530 / DSM 4299 / JCM 9571 / NBRC 15438 / GSS1), this protein is Putative lon protease homolog.